We begin with the raw amino-acid sequence, 965 residues long: Chondroitin synthase (965 aa).

The tract at residues 132–418 (FTWYKNRKKS…IVKEKVPYIY (287 aa)) is galactosaminyltransferase; A1 domain. UDP-N-acetyl-alpha-D-galactosamine-binding positions include Pro-158, Arg-162, Asp-189, Tyr-218, Arg-224, and 240–241 (DC). Asp-242 provides a ligand contact to Mn(2+). 362-363 (ED) is a binding site for UDP-N-acetyl-alpha-D-galactosamine. Position 387 (His-387) interacts with Mn(2+). The segment at 419-683 (RKLLPIEDSH…ESRKYIFNKT (265 aa)) is glucuronosyltransferase; A2 domain. UDP-alpha-D-glucuronate contacts are provided by residues Tyr-442, Asp-470, and 518–521 (QLDS). Asp-522 provides a ligand contact to Mn(2+). UDP-alpha-D-glucuronate contacts are provided by residues His-582 and 604-605 (AV). His-632 contributes to the Mn(2+) binding site.

The protein belongs to the glycosyltransferase 2 family. CS/HAS subfamily. Requires Mn(2+) as cofactor.

Its subcellular location is the cell membrane. The enzyme catalyses 3-O-(beta-D-GlcA-(1-&gt;3)-beta-D-GalNAc-(1-&gt;4)-beta-D-GlcA-(1-&gt;3)-beta-D-Gal-(1-&gt;3)-beta-D-Gal-(1-&gt;4)-beta-D-Xyl)-L-seryl-[protein] + UDP-N-acetyl-alpha-D-galactosamine = 3-O-(beta-D-GalNAc-(1-&gt;4)-beta-D-GlcA-(1-&gt;3)-beta-D-GalNAc-(1-&gt;4)-beta-D-GlcA-(1-&gt;3)-beta-D-Gal-(1-&gt;3)-beta-D-Gal-(1-&gt;4)-beta-D-Xyl)-L-seryl-[protein] + UDP + H(+). It catalyses the reaction 3-O-{beta-D-GlcA-(1-&gt;3)-[beta-D-GalNAc-(1-&gt;4)-beta-D-GlcA-(1-&gt;3)](n)-beta-D-GalNAc-(1-&gt;4)-beta-D-GlcA-(1-&gt;3)-beta-D-Gal-(1-&gt;3)-beta-D-Gal-(1-&gt;4)-beta-D-Xyl}-L-seryl-[protein] + UDP-N-acetyl-alpha-D-galactosamine = 3-O-{[beta-D-GalNAc-(1-&gt;4)-beta-D-GlcA-(1-&gt;3)](n+1)-beta-D-GalNAc-(1-&gt;4)-beta-D-GlcA-(1-&gt;3)-beta-D-Gal-(1-&gt;3)-beta-D-Gal-(1-&gt;4)-beta-D-Xyl}-L-seryl-[protein] + UDP + H(+). It carries out the reaction 3-O-(beta-D-GalNAc-(1-&gt;4)-beta-D-GlcA-(1-&gt;3)-beta-D-Gal-(1-&gt;3)-beta-D-Gal-(1-&gt;4)-beta-D-Xyl)-L-seryl-[protein] + UDP-alpha-D-glucuronate = 3-O-(beta-D-GlcA-(1-&gt;3)-beta-D-GalNAc-(1-&gt;4)-beta-D-GlcA-(1-&gt;3)-beta-D-Gal-(1-&gt;3)-beta-D-Gal-(1-&gt;4)-beta-D-Xyl)-L-seryl-[protein] + UDP + H(+). The catalysed reaction is 3-O-{[beta-D-GalNAc-(1-&gt;4)-beta-D-GlcA-(1-&gt;3)](n)-beta-D-GalNAc-(1-&gt;4)-beta-D-GlcA-(1-&gt;3)-beta-D-Gal-(1-&gt;3)-beta-D-Gal-(1-&gt;4)-beta-D-Xyl}-L-seryl-[protein] + UDP-alpha-D-glucuronate = 3-O-{beta-D-GlcA-(1-&gt;3)-[beta-D-GalNAc-(1-&gt;4)-beta-D-GlcA-(1-&gt;3)](n)-beta-D-GalNAc-(1-&gt;4)-beta-D-GlcA-(1-&gt;3)-beta-D-Gal-(1-&gt;3)-beta-D-Gal-(1-&gt;4)-beta-D-Xyl}-L-seryl-[protein] + UDP + H(+). In terms of biological role, glycosyltransferase that catalyzes elongation of chondroitin, a polysaccharide composed of a repeating disaccharide of N-acetylgalactosamine (GalNAc) and glucuronic acid (GlcUA) units, by alternatively transferring the GlcUA and GalNAc moiety from UDP-GlcUA and UDP-GalNAc to the non-reducing ends of the chondroitin chain. Each chondroitin unit has the composition beta-(1-&gt;4)-GlcUA-beta-(1-&gt;3)-GalNAc. The sequence is that of Chondroitin synthase (fcbD) from Pasteurella multocida (strain Pm70).